The following is a 701-amino-acid chain: Glycine--tRNA ligase beta subunit (701 aa).

The protein belongs to the class-II aminoacyl-tRNA synthetase family. As to quaternary structure, tetramer of two alpha and two beta subunits.

The protein localises to the cytoplasm. It catalyses the reaction tRNA(Gly) + glycine + ATP = glycyl-tRNA(Gly) + AMP + diphosphate. The chain is Glycine--tRNA ligase beta subunit from Nitratidesulfovibrio vulgaris (strain DSM 19637 / Miyazaki F) (Desulfovibrio vulgaris).